Here is a 594-residue protein sequence, read N- to C-terminus: (-)-endo-fenchol synthase, chloroplastic (594 aa).

A chloroplast-targeting transit peptide spans M1–V50. Mg(2+) is bound by residues D348, D352, D492, and E500. The DDXXD motif signature appears at D348–D352.

The protein belongs to the terpene synthase family. Tpsa subfamily. The cofactor is Mg(2+). It depends on Mn(2+) as a cofactor. Expressed at high levels in leaves.

The protein localises to the plastid. Its subcellular location is the chloroplast. The enzyme catalyses (2E)-geranyl diphosphate = alpha-pinene + diphosphate. It carries out the reaction (2E)-geranyl diphosphate + H2O = (1S,2S,4R)-endo-fenchol + diphosphate. It catalyses the reaction (2E)-geranyl diphosphate = limonene + diphosphate. It participates in secondary metabolite biosynthesis; terpenoid biosynthesis. Monoterpene synthase involved in the biosynthesis of volatile compounds widely used in aromatherapy and folk medicine, and present in culinary herbs. Mediates the conversion of (2E)-geranyl diphosphate (GPP) into alpha fenchol, limonene and alpha-pinene and, as minor compounds, into beta-myrcene, alpha-terpinolene and alpha-phellandrene. The sequence is that of (-)-endo-fenchol synthase, chloroplastic from Lavandula pedunculata subsp. lusitanica (French lavender).